The sequence spans 526 residues: Light-independent protochlorophyllide reductase subunit B (526 aa).

A [4Fe-4S] cluster-binding site is contributed by Asp-36. Asp-290 serves as the catalytic Proton donor. 425–426 provides a ligand contact to substrate; it reads GL.

The protein belongs to the ChlB/BchB/BchZ family. In terms of assembly, protochlorophyllide reductase is composed of three subunits; ChlL, ChlN and ChlB. Forms a heterotetramer of two ChlB and two ChlN subunits. [4Fe-4S] cluster is required as a cofactor.

It catalyses the reaction chlorophyllide a + oxidized 2[4Fe-4S]-[ferredoxin] + 2 ADP + 2 phosphate = protochlorophyllide a + reduced 2[4Fe-4S]-[ferredoxin] + 2 ATP + 2 H2O. It functions in the pathway porphyrin-containing compound metabolism; chlorophyll biosynthesis (light-independent). In terms of biological role, component of the dark-operative protochlorophyllide reductase (DPOR) that uses Mg-ATP and reduced ferredoxin to reduce ring D of protochlorophyllide (Pchlide) to form chlorophyllide a (Chlide). This reaction is light-independent. The NB-protein (ChlN-ChlB) is the catalytic component of the complex. This Prochlorococcus marinus subsp. pastoris (strain CCMP1986 / NIES-2087 / MED4) protein is Light-independent protochlorophyllide reductase subunit B.